The primary structure comprises 257 residues: Adenosylcobinamide-GDP ribazoletransferase (257 aa).

7 consecutive transmembrane segments (helical) span residues 30-50, 52-72, 109-129, 132-152, 175-195, 198-218, and 237-257; these read IVYFPLVGFVIGILSYLIGWI, MLLFEPFIASIIITLAGVLIT, SLLAIMFVLLLKVGFVYDIIS, SLWVIIFMPMIARLGVMLLTY, LITAIIYTLLIVALITKFIFL, NIVLIKVLGSIIVVFVFIILF, and GIELSELVYLIYIYLLIFMFF.

It belongs to the CobS family. The cofactor is Mg(2+).

It localises to the cell membrane. It catalyses the reaction alpha-ribazole + adenosylcob(III)inamide-GDP = adenosylcob(III)alamin + GMP + H(+). The catalysed reaction is alpha-ribazole 5'-phosphate + adenosylcob(III)inamide-GDP = adenosylcob(III)alamin 5'-phosphate + GMP + H(+). It participates in cofactor biosynthesis; adenosylcobalamin biosynthesis; adenosylcobalamin from cob(II)yrinate a,c-diamide: step 7/7. In terms of biological role, joins adenosylcobinamide-GDP and alpha-ribazole to generate adenosylcobalamin (Ado-cobalamin). Also synthesizes adenosylcobalamin 5'-phosphate from adenosylcobinamide-GDP and alpha-ribazole 5'-phosphate. The sequence is that of Adenosylcobinamide-GDP ribazoletransferase from Clostridioides difficile (strain 630) (Peptoclostridium difficile).